The chain runs to 115 residues: Evasin P1183 (115 aa).

The N-terminal stretch at 1–25 (MTRNWSFRVIFVSAMWCALLKFATL) is a signal peptide. Cystine bridges form between Cys-38/Cys-58, Cys-54/Cys-94, Cys-70/Cys-99, and Cys-89/Cys-108. N-linked (GlcNAc...) asparagine glycosylation is found at Asn-45, Asn-72, and Asn-103.

The protein localises to the secreted. Salivary chemokine-binding protein which binds to host chemokine CCL2. This Amblyomma triste (Neotropical tick) protein is Evasin P1183.